Reading from the N-terminus, the 179-residue chain is Peptidyl-tRNA hydrolase (179 aa).

A tRNA-binding site is contributed by Tyr15. His20 acts as the Proton acceptor in catalysis. TRNA contacts are provided by Tyr66, Asn68, and Asn114.

The protein belongs to the PTH family. As to quaternary structure, monomer.

It localises to the cytoplasm. It carries out the reaction an N-acyl-L-alpha-aminoacyl-tRNA + H2O = an N-acyl-L-amino acid + a tRNA + H(+). In terms of biological role, hydrolyzes ribosome-free peptidyl-tRNAs (with 1 or more amino acids incorporated), which drop off the ribosome during protein synthesis, or as a result of ribosome stalling. Its function is as follows. Catalyzes the release of premature peptidyl moieties from peptidyl-tRNA molecules trapped in stalled 50S ribosomal subunits, and thus maintains levels of free tRNAs and 50S ribosomes. The sequence is that of Peptidyl-tRNA hydrolase from Chlamydia muridarum (strain MoPn / Nigg).